The sequence spans 166 residues: Deglycase PfpI (166 aa).

The PfpI endopeptidase domain maps to M1–K166. C100 functions as the Nucleophile in the catalytic mechanism. Residue H101 is part of the active site.

Belongs to the peptidase C56 family. In terms of assembly, homooligomer. Exists in two functional species: the predominant form is a homohexamer that comprises about 90% of the total activity, and the minor form is trimeric.

It localises to the cytoplasm. It carries out the reaction N(omega)-(1-hydroxy-2-oxopropyl)-L-arginyl-[protein] + H2O = lactate + L-arginyl-[protein] + H(+). It catalyses the reaction N(6)-(1-hydroxy-2-oxopropyl)-L-lysyl-[protein] + H2O = lactate + L-lysyl-[protein] + H(+). The catalysed reaction is S-(1-hydroxy-2-oxopropyl)-L-cysteinyl-[protein] + H2O = lactate + L-cysteinyl-[protein] + H(+). The enzyme catalyses N(omega)-(1-hydroxy-2-oxoethyl)-L-arginyl-[protein] + H2O = L-arginyl-[protein] + glycolate + H(+). It carries out the reaction N(6)-(1-hydroxy-2-oxoethyl)-L-lysyl-[protein] + H2O = glycolate + L-lysyl-[protein] + H(+). It catalyses the reaction S-(1-hydroxy-2-oxoethyl)-L-cysteinyl-[protein] + H2O = glycolate + L-cysteinyl-[protein] + H(+). Its function is as follows. Deglycase that catalyzes the deglycation of the Maillard adducts formed between amino groups of proteins and reactive carbonyl groups of glyoxals. Thus, functions as a protein deglycase that repairs methylglyoxal- and glyoxal-glycated proteins, and releases repaired proteins and lactate or glycolate, respectively. Deglycates cysteine, arginine and lysine residues in proteins, and thus reactivates these proteins by reversing glycation by glyoxals. Thus, was shown to afford full protection against glycation of thioredoxin by glyoxal. Acts on early glycation intermediates (hemithioacetals and aminocarbinols), preventing the formation of advanced glycation endproducts (AGE) that cause irreversible damage. Prevents acrylamide formation in asparagine/glyoxal and asparagine/sugar mixtures, likely by degrading asparagine/glyoxal Maillard adducts formed at high temperatures. Also displays proteolytic activity. Cleaves at the carboxyl side of both basic and hydrophobic residues in the P1 position, indicating trypsin- and chymotrypsin-like specificities. This chain is Deglycase PfpI, found in Pyrococcus furiosus (strain ATCC 43587 / DSM 3638 / JCM 8422 / Vc1).